Reading from the N-terminus, the 584-residue chain is Isocitrate dehydrogenase kinase/phosphatase (584 aa).

ATP contacts are provided by residues 315–321 (APGVKGM) and Lys336. Residue Asp371 is part of the active site.

It belongs to the AceK family.

The protein resides in the cytoplasm. It carries out the reaction L-seryl-[isocitrate dehydrogenase] + ATP = O-phospho-L-seryl-[isocitrate dehydrogenase] + ADP + H(+). In terms of biological role, bifunctional enzyme which can phosphorylate or dephosphorylate isocitrate dehydrogenase (IDH) on a specific serine residue. This is a regulatory mechanism which enables bacteria to bypass the Krebs cycle via the glyoxylate shunt in response to the source of carbon. When bacteria are grown on glucose, IDH is fully active and unphosphorylated, but when grown on acetate or ethanol, the activity of IDH declines drastically concomitant with its phosphorylation. The sequence is that of Isocitrate dehydrogenase kinase/phosphatase from Serratia proteamaculans (strain 568).